The sequence spans 150 residues: Clitocypin (150 aa).

It belongs to the protease inhibitor I48 family. In terms of assembly, homodimer. Uniformly expressed throughout the mature fruiting body (at mRNA and protein level).

Its function is as follows. Binds and inhibits cysteine proteinases. Inhibits most strongly papain and cathepsin L, more weakly bromelain and cathepsin B while it is completely ineffective against cathepsin H. The protein is Clitocypin (Cnc1) of Clitocybe nebularis (Clouded agaric).